The sequence spans 114 residues: Tyrosine-protein phosphatase 27 (114 aa).

In terms of domain architecture, Tyrosine-protein phosphatase spans 1–114; the sequence is WQMIVEHKCC…ELGNDNPIVV (114 aa). A substrate-binding site is contributed by aspartate 82.

This sequence belongs to the protein-tyrosine phosphatase family.

It catalyses the reaction O-phospho-L-tyrosyl-[protein] + H2O = L-tyrosyl-[protein] + phosphate. This chain is Tyrosine-protein phosphatase 27 (STY-27), found in Styela plicata (Wrinkled sea squirt).